The sequence spans 118 residues: Large ribosomal subunit protein bL20 (118 aa).

It belongs to the bacterial ribosomal protein bL20 family.

In terms of biological role, binds directly to 23S ribosomal RNA and is necessary for the in vitro assembly process of the 50S ribosomal subunit. It is not involved in the protein synthesizing functions of that subunit. The sequence is that of Large ribosomal subunit protein bL20 from Elusimicrobium minutum (strain Pei191).